The sequence spans 676 residues: MLLRNILHIPETHAHFLMPVLQSSGGHQVSMQNTILWNLFIQSIDKLLLYLMTCPQRALWGVTMVQLIAMIYKDQHVNTLQKLLNLWFEASLSESSEDNESNTSPPKKGSGDSSPMLTSDPTSDSSDNGSNGGGSSGKKEGCDERRQALREGTEATLQEVSRKGHDYQNAMARVTADKPDISEVASDSFEVPCSPQQHLNTEEAMDDIDYEEQVQEYEQEAAAVSSEPLNLSQPANNVNYTTNAVYASTTATETQTTSSLCAMTSLCYEPFKPPAPLPTRRNTLSEMLSDNYTSHSHVSAVKLGQKSSHAGQLQLTKGKCCPQKRECPSSQSELSDCGYATQVENPESISTSSNDDDGPQGKPQHQKPPCNTKPRNKQRTLMSPQDKKELRRKKLVKRSKSSLINMKGLVQHTPTNYDISNLLKEFTVDFLLKGYNYLVEELLKQLLTSAKVLIDTSHFFWLVTFFLKLAAQLELDMEHIDSILTYDVLSYLTYEGVSLCEQLELNAQQEGSDLQPYLRRMHLVVTAIREFLQTIETYNKVSHLSEDDRLRLHQLQLQIGATTDLRCLFVLLLRRFNPRIHSKQYLQDLVVTNHILMLILDSAAKLEGGQTIGLSEHISQFATLEVMHYYGILLEDFDNNGEFVNDCIFTMMHHIGGDLGQIGVLFQPIILKTYSR.

Residues 77–108 form a necessary for normal circadian rhythm region; sequence VNTLQKLLNLWFEASLSESSEDNESNTSPPKK. Disordered regions lie at residues 94-145 and 346-398; these read ESSE…CDER and PESI…LVKR. Low complexity-rich tracts occupy residues 101-129 and 360-369; these read SNTS…SDNG and QGKPQHQKPP. The short motif at 388–398 is the Nuclear localization signal element; the sequence is KELRRKKLVKR.

It belongs to the timeless family. As to quaternary structure, forms a heterodimer with period (PER); the complex then translocates into the nucleus. Post-translationally, phosphorylated with a circadian rhythmicity.

Its subcellular location is the nucleus. It is found in the cytoplasm. It localises to the perinuclear region. In terms of biological role, required for the production of circadian rhythms. The biological cycle depends on the rhythmic formation and nuclear localization of the TIM-PER complex. Light induces the degradation of TIM, which promotes elimination of PER. Nuclear activity of the heterodimer coordinatively regulates PER and TIM transcription through a negative feedback loop. Behaves as a negative element in circadian transcriptional loop. Does not appear to bind DNA, suggesting indirect transcriptional inhibition. The protein is Protein timeless (tim) of Drosophila hydei (Fruit fly).